A 290-amino-acid polypeptide reads, in one-letter code: 4-hydroxy-tetrahydrodipicolinate synthase (290 aa).

Threonine 44 provides a ligand contact to pyruvate. The active-site Proton donor/acceptor is tyrosine 131. Lysine 159 functions as the Schiff-base intermediate with substrate in the catalytic mechanism. Position 201 (isoleucine 201) interacts with pyruvate.

Belongs to the DapA family. Homotetramer; dimer of dimers.

The protein resides in the cytoplasm. The catalysed reaction is L-aspartate 4-semialdehyde + pyruvate = (2S,4S)-4-hydroxy-2,3,4,5-tetrahydrodipicolinate + H2O + H(+). It participates in amino-acid biosynthesis; L-lysine biosynthesis via DAP pathway; (S)-tetrahydrodipicolinate from L-aspartate: step 3/4. Its function is as follows. Catalyzes the condensation of (S)-aspartate-beta-semialdehyde [(S)-ASA] and pyruvate to 4-hydroxy-tetrahydrodipicolinate (HTPA). This Jannaschia sp. (strain CCS1) protein is 4-hydroxy-tetrahydrodipicolinate synthase.